Consider the following 122-residue polypeptide: Large ribosomal subunit protein uL18 (122 aa).

The segment at 1-25 is disordered; it reads MSQISRKQQTQKRHRRLRRHITGTS. Positions 9-21 are enriched in basic residues; the sequence is QTQKRHRRLRRHI.

The protein belongs to the universal ribosomal protein uL18 family. In terms of assembly, part of the 50S ribosomal subunit; part of the 5S rRNA/L5/L18/L25 subcomplex. Contacts the 5S and 23S rRNAs.

Functionally, this is one of the proteins that bind and probably mediate the attachment of the 5S RNA into the large ribosomal subunit, where it forms part of the central protuberance. This Synechococcus sp. (strain CC9605) protein is Large ribosomal subunit protein uL18.